A 283-amino-acid chain; its full sequence is 2-hydroxymuconate semialdehyde hydrolase (283 aa).

Positions 32 to 262 constitute an AB hydrolase-1 domain; that stretch reads LMMIHGSGPG…QCGHWTQIEH (231 aa). Active-site residues include Ser-107, Asp-228, and His-256.

It belongs to the DmpD/TodF/XylF esterase family.

It carries out the reaction (2Z,4E)-2-hydroxy-6-oxohexa-2,4-dienoate + H2O = 2-oxopent-4-enoate + formate + H(+). It participates in aromatic compound metabolism; benzoate degradation via hydroxylation. Its function is as follows. Catalyzes the conversion of 2-hydroxymuconate semialdehyde to 2-hydroxypent-2,4-dienoate. The protein is 2-hydroxymuconate semialdehyde hydrolase (dmpD) of Pseudomonas sp. (strain CF600).